The sequence spans 79 residues: Sulfur carrier protein TusA (79 aa).

The Cysteine persulfide intermediate role is filled by Cys17.

It belongs to the sulfur carrier protein TusA family.

The protein resides in the cytoplasm. In terms of biological role, sulfur carrier protein which probably makes part of a sulfur-relay system. In Pseudoalteromonas translucida (strain TAC 125), this protein is Sulfur carrier protein TusA.